Reading from the N-terminus, the 170-residue chain is Ureidoglycolate lyase (170 aa).

It belongs to the ureidoglycolate lyase family. As to quaternary structure, homodimer. Ni(2+) serves as cofactor.

It catalyses the reaction (S)-ureidoglycolate = urea + glyoxylate. It functions in the pathway nitrogen metabolism; (S)-allantoin degradation. Functionally, catalyzes the catabolism of the allantoin degradation intermediate (S)-ureidoglycolate, generating urea and glyoxylate. Involved in the utilization of allantoin as nitrogen source. This is Ureidoglycolate lyase from Pseudomonas syringae pv. syringae (strain B728a).